A 449-amino-acid polypeptide reads, in one-letter code: Clusterin (449 aa).

An N-terminal signal peptide occupies residues 1–21; that stretch reads MKTLLLLVGLLLTLENGQVLG. Positions 77–80 match the Nuclear localization signal motif; it reads KKKK. 2 N-linked (GlcNAc...) asparagine glycosylation sites follow: Asn85 and Asn102. 5 cysteine pairs are disulfide-bonded: Cys101/Cys313, Cys112/Cys305, Cys115/Cys302, Cys120/Cys295, and Cys128/Cys285. Ser132 bears the Phosphoserine mark. 5 N-linked (GlcNAc...) asparagine glycosylation sites follow: Asn144, Asn291, Asn328, Asn354, and Asn374. Ser396 carries the phosphoserine modification. A Nuclear localization signal motif is present at residues 443–447; it reads RQKNR.

The protein belongs to the clusterin family. Antiparallel disulfide-linked heterodimer of an alpha chain and a beta chain. Self-associates and forms higher oligomers. Interacts with a broad range of misfolded proteins, including APP, APOC2 and LYZ. Slightly acidic pH promotes interaction with misfolded proteins. Forms high-molecular weight oligomers upon interaction with misfolded proteins. Interacts with APOA1, LRP2, CLUAP1 and PON1. Interacts with the complement membrane attack complex. Interacts (via alpha chain) with XRCC6. Interacts with SYVN1, COMMD1, BTRC, CUL1 and with ubiquitin and SCF (SKP1-CUL1-F-box protein) E3 ubiquitin-protein ligase complexes. Interacts (via alpha chain) with BAX in stressed cells, where BAX undergoes a conformation change leading to association with the mitochondrial membrane. Does not interact with BAX in unstressed cells. Found in a complex with LTF, CLU, EPPIN and SEMG1. Interacts (immaturely glycosylated pre-secreted form) with HSPA5; this interaction promotes CLU stability and facilitates stress-induced CLU retrotranslocation from the secretory pathway to the mitochondria, thereby reducing stress-induced apoptosis by stabilizing mitochondrial membrane integrity. Interacts with BCL2L1; this interaction releases and activates BAX and promotes cell death. Interacts with TGFBR2 and ACVR1. Interacts (secreted form) with STMN3; this interaction may act as an important modulator during neuronal differentiation. Interacts with VLDLR and LRP8. In terms of processing, proteolytically cleaved on its way through the secretory system, probably within the Golgi lumen. Proteolytic cleavage is not necessary for its chaperone activity. All non-secreted forms are not proteolytically cleaved. Chaperone activity of uncleaved forms is dependent on a non-reducing environment. Post-translationally, polyubiquitinated, leading to proteasomal degradation. Under cellular stress, the intracellular level of cleaved form is reduced due to proteasomal degradation. Heavily N-glycosylated. About 30% of the protein mass is comprised of complex N-linked carbohydrate. Endoplasmic reticulum (ER) stress induces changes in glycosylation status and increases level of hypoglycosylated forms. Core carbohydrates are essential for chaperone activity. Non-secreted forms are hypoglycosylated or unglycosylated.

The protein localises to the secreted. The protein resides in the nucleus. Its subcellular location is the cytoplasm. It is found in the mitochondrion membrane. It localises to the cytosol. The protein localises to the microsome. The protein resides in the endoplasmic reticulum. Its subcellular location is the mitochondrion. It is found in the perinuclear region. It localises to the cytoplasmic vesicle. The protein localises to the secretory vesicle. The protein resides in the chromaffin granule. Functionally, functions as extracellular chaperone that prevents aggregation of non native proteins. Prevents stress-induced aggregation of blood plasma proteins. Inhibits formation of amyloid fibrils by APP, APOC2, B2M, CALCA, CSN3, SNCA and aggregation-prone LYZ variants (in vitro). Does not require ATP. Maintains partially unfolded proteins in a state appropriate for subsequent refolding by other chaperones, such as HSPA8/HSC70. Does not refold proteins by itself. Binding to cell surface receptors triggers internalization of the chaperone-client complex and subsequent lysosomal or proteasomal degradation. When secreted, protects cells against apoptosis and against cytolysis by complement: inhibits assembly of the complement membrane attack complex (MAC) by preventing polymerization of C9 pore component of the MAC complex. Intracellular forms interact with ubiquitin and SCF (SKP1-CUL1-F-box protein) E3 ubiquitin-protein ligase complexes and promote the ubiquitination and subsequent proteasomal degradation of target proteins. Promotes proteasomal degradation of COMMD1 and IKBKB. Modulates NF-kappa-B transcriptional activity. Following stress, promotes apoptosis. Inhibits apoptosis when associated with the mitochondrial membrane by interference with BAX-dependent release of cytochrome c into the cytoplasm. Plays a role in the regulation of cell proliferation. An intracellular form suppresses stress-induced apoptosis by stabilizing mitochondrial membrane integrity through interaction with HSPA5. Secreted form does not affect caspase or BAX-mediated intrinsic apoptosis and TNF-induced NF-kappa-B-activity. Secreted form act as an important modulator during neuronal differentiation through interaction with STMN3. Plays a role in the clearance of immune complexes that arise during cell injury. The sequence is that of Clusterin (CLU) from Equus caballus (Horse).